Reading from the N-terminus, the 316-residue chain is Pantothenate kinase (316 aa).

95–102 (GSVAVGKS) lines the ATP pocket.

The protein belongs to the prokaryotic pantothenate kinase family.

The protein localises to the cytoplasm. It carries out the reaction (R)-pantothenate + ATP = (R)-4'-phosphopantothenate + ADP + H(+). Its pathway is cofactor biosynthesis; coenzyme A biosynthesis; CoA from (R)-pantothenate: step 1/5. This chain is Pantothenate kinase, found in Shigella dysenteriae serotype 1 (strain Sd197).